The chain runs to 197 residues: MYEYFEGTITVVNPAYVVIEVAGIGYRILTPTPYAYKEGDKARIYVEQVVRENGMTLYGFKSQQDKVLFNKLNEVSGIGPKSALAIMAAEDNGALASAIESGEVSYLTRFPGIGKKTASQIVLDLRGKMGNYVAENLFTEDEPVESVFPALEDALLALGALGYSQKEVDRIKPKLKKLPEMSADEYIKQGLGFLLKK.

Residues 1-61 (MYEYFEGTIT…ENGMTLYGFK (61 aa)) form a domain I region. The segment at 62 to 140 (SQQDKVLFNK…NYVAENLFTE (79 aa)) is domain II. The flexible linker stretch occupies residues 141 to 150 (DEPVESVFPA). The interval 150–197 (ALEDALLALGALGYSQKEVDRIKPKLKKLPEMSADEYIKQGLGFLLKK) is domain III.

Belongs to the RuvA family. In terms of assembly, homotetramer. Forms an RuvA(8)-RuvB(12)-Holliday junction (HJ) complex. HJ DNA is sandwiched between 2 RuvA tetramers; dsDNA enters through RuvA and exits via RuvB. An RuvB hexamer assembles on each DNA strand where it exits the tetramer. Each RuvB hexamer is contacted by two RuvA subunits (via domain III) on 2 adjacent RuvB subunits; this complex drives branch migration. In the full resolvosome a probable DNA-RuvA(4)-RuvB(12)-RuvC(2) complex forms which resolves the HJ.

It is found in the cytoplasm. In terms of biological role, the RuvA-RuvB-RuvC complex processes Holliday junction (HJ) DNA during genetic recombination and DNA repair, while the RuvA-RuvB complex plays an important role in the rescue of blocked DNA replication forks via replication fork reversal (RFR). RuvA specifically binds to HJ cruciform DNA, conferring on it an open structure. The RuvB hexamer acts as an ATP-dependent pump, pulling dsDNA into and through the RuvAB complex. HJ branch migration allows RuvC to scan DNA until it finds its consensus sequence, where it cleaves and resolves the cruciform DNA. The sequence is that of Holliday junction branch migration complex subunit RuvA from Lactobacillus delbrueckii subsp. bulgaricus (strain ATCC BAA-365 / Lb-18).